A 186-amino-acid chain; its full sequence is Biofilm operon icaADBC HTH-type negative transcriptional regulator IcaR (186 aa).

Residues 1 to 59 enclose the HTH tetR-type domain; that stretch reads MKDKIIDNAITLFSEKGYDGTTLDDIAKSVNIKKASLYYHFDSKKSIYEQSVKCCFDYL. Positions 22-41 form a DNA-binding region, H-T-H motif; sequence TLDDIAKSVNIKKASLYYHF.

Homodimer.

In terms of biological role, represses transcription of the icaADBC operon necessary for biofilm production. This is Biofilm operon icaADBC HTH-type negative transcriptional regulator IcaR (icaR) from Staphylococcus aureus (strain NCTC 8325 / PS 47).